The chain runs to 409 residues: uncharacterized protein (409 aa).

Residues 1–209 (MRVFVARQPI…GHDLSTHFYS (209 aa)) form the EAL domain. The region spanning 203 to 392 (LSTHFYSYYE…GNQLDKEEAY (190 aa)) is the HDOD domain.

This is an uncharacterized protein from Bacillus subtilis (strain 168).